Here is a 727-residue protein sequence, read N- to C-terminus: MNQSRSFVTGRGRDLSRTPSALSSNSETPGSMSSPSEGKTNAWVNSAYVSNFPALGQSQGLPSHKCSALALRSSQTTYIINFPRQHWNIMTFPNQSEAILANVASYAKDLDGKNSFAVSDTLKIALVLSPTEKRLFRNDTLSHLADVHMYVLDPAEAEGKNLSDSETVYVYVTPPNLTDVKPTTVVLTECAANAKSANDLRQYIVTQLRKMPSLPFGCTTYAPGFLSDGVCKEHPNLFTSEELGAKIKVLTKLLIRCATSMSQDGSNAFCPKHPKVKIVHESNATSYVLFNRPNGMVATNLILSDLPDDDCPTCWILKLAISEARFYALDGHHRCRSGIITSSVFRYLASIVIRVRMDSVLAPSDASSTDHAALVNMMCGIIQNTPAMRQLGISTGSEKVNNRSMRVIIMQENADRLTQMAALYHLFLDYFGALNGWGFYFCSLTSLYGEFHGFSVGFSGEITHVNVASVIAKNWDTQSGIDNILEFKTITIPVHNEDIVCMVERTLAESFEVVMNEHFNGASTIKVRRNGGDSRFNFTISNPRDAFLLLQKAVADGGILQKILCRAMLKAITSHALRADREVQDVSFSFVLKMRLNPVNKSDSKSSELAHTAQMNSLPVFLASTPFTMQLGTLRDALLKKTENVTVINMARTTEEVSKDALQEILKSIGGSSMTLEDTAEPVSDAESIPDPPPRSWASEDEAVNSPQIYSSRRKARKARAASKLSK.

Disordered regions lie at residues 1-38 and 673-727; these read MNQS…PSEG and SMTL…KLSK. Polar residues predominate over residues 17–38; sequence RTPSALSSNSETPGSMSSPSEG. Residues 712–727 show a composition bias toward basic residues; that stretch reads SRRKARKARAASKLSK.

In Rice dwarf virus (isolate Akita) (RDV), this protein is Non-structural protein 4.